A 147-amino-acid polypeptide reads, in one-letter code: uncharacterized protein (147 aa).

Transmembrane regions (helical) follow at residues 41 to 61 and 67 to 87; these read LANF…ALLI and LLAA…SFPL.

It is found in the cell membrane. This is an uncharacterized protein from Pyrococcus horikoshii (strain ATCC 700860 / DSM 12428 / JCM 9974 / NBRC 100139 / OT-3).